Reading from the N-terminus, the 143-residue chain is Large ribosomal subunit protein uL16 (143 aa).

Belongs to the universal ribosomal protein uL16 family. In terms of assembly, part of the 50S ribosomal subunit.

In terms of biological role, binds 23S rRNA and is also seen to make contacts with the A and possibly P site tRNAs. The protein is Large ribosomal subunit protein uL16 of Sphingopyxis alaskensis (strain DSM 13593 / LMG 18877 / RB2256) (Sphingomonas alaskensis).